Reading from the N-terminus, the 340-residue chain is Ketol-acid reductoisomerase (NADP(+)) (340 aa).

In terms of domain architecture, KARI N-terminal Rossmann spans 1–183 (MAITVYYDKD…GGGRTGIIET (183 aa)). NADP(+)-binding positions include 26-29 (FGSQ), S54, and 84-87 (DEFQ). The active site involves H109. G135 serves as a coordination point for NADP(+). Positions 184–329 (TFKAETETDL…EKLRGMMPWI (146 aa)) constitute a KARI C-terminal knotted domain. Mg(2+)-binding residues include D192, E196, E228, and E232. Residue S253 participates in substrate binding.

The protein belongs to the ketol-acid reductoisomerase family. Requires Mg(2+) as cofactor.

The catalysed reaction is (2R)-2,3-dihydroxy-3-methylbutanoate + NADP(+) = (2S)-2-acetolactate + NADPH + H(+). The enzyme catalyses (2R,3R)-2,3-dihydroxy-3-methylpentanoate + NADP(+) = (S)-2-ethyl-2-hydroxy-3-oxobutanoate + NADPH + H(+). It functions in the pathway amino-acid biosynthesis; L-isoleucine biosynthesis; L-isoleucine from 2-oxobutanoate: step 2/4. The protein operates within amino-acid biosynthesis; L-valine biosynthesis; L-valine from pyruvate: step 2/4. Its function is as follows. Involved in the biosynthesis of branched-chain amino acids (BCAA). Catalyzes an alkyl-migration followed by a ketol-acid reduction of (S)-2-acetolactate (S2AL) to yield (R)-2,3-dihydroxy-isovalerate. In the isomerase reaction, S2AL is rearranged via a Mg-dependent methyl migration to produce 3-hydroxy-3-methyl-2-ketobutyrate (HMKB). In the reductase reaction, this 2-ketoacid undergoes a metal-dependent reduction by NADPH to yield (R)-2,3-dihydroxy-isovalerate. The protein is Ketol-acid reductoisomerase (NADP(+)) of Campylobacter fetus subsp. fetus (strain 82-40).